A 1246-amino-acid chain; its full sequence is Superkiller complex protein 2 (1246 aa).

The segment at 220–246 is disordered; sequence LGGGDEDENEAVGQPGGPRGDTVSASP. A phosphoserine mark is found at serine 245 and serine 256. One can recognise a Helicase ATP-binding domain in the interval 319–475; the sequence is ILHLERHDSV…WIGRLKRRQI (157 aa). 332-339 lines the ATP pocket; it reads AHTSAGKT. Residues 423 to 426 carry the DEVH box motif; that stretch reads DEVH. Residues 585–755 enclose the Helicase C-terminal domain; it reads GLTSLDLTTS…LTYTMILNLL (171 aa).

It belongs to the helicase family. SKI2 subfamily. As to quaternary structure, component of the SKI complex which consists of SKIC2, SKIC3 and SKIC8. Interacts with HBS1L isoform 2.

The protein resides in the nucleus. The protein localises to the cytoplasm. The enzyme catalyses ATP + H2O = ADP + phosphate + H(+). In terms of biological role, helicase component of the SKI complex, a multiprotein complex that assists the RNA-degrading exosome during the mRNA decay and quality-control pathways. The SKI complex catalyzes mRNA extraction from 80S ribosomal complexes in the 3'-5' direction and channels mRNA to the cytosolic exosome for degradation. SKI-mediated extraction of mRNA from stalled ribosomes allow binding of the Pelota-HBS1L complex and subsequent ribosome disassembly by ABCE1 for ribosome recycling. In the nucleus, the SKI complex associates with transcriptionally active genes in a manner dependent on PAF1 complex (PAF1C). The chain is Superkiller complex protein 2 from Homo sapiens (Human).